A 258-amino-acid polypeptide reads, in one-letter code: Arylamine N-acetyltransferase 1 (258 aa).

Residue Cys59 is the Acyl-thioester intermediate of the active site. Residue 97–98 coordinates substrate; it reads IH. Active-site residues include His98 and Asp113. Positions 199 and 205 each coordinate CoA.

It belongs to the arylamine N-acetyltransferase family.

The protein localises to the cytoplasm. The catalysed reaction is an arylamine + acetyl-CoA = an N-acetylarylamine + CoA. In terms of biological role, participates in the detoxification of a plethora of hydrazine and arylamine drugs. In Felis catus (Cat), this protein is Arylamine N-acetyltransferase 1 (NAT1).